Reading from the N-terminus, the 369-residue chain is uncharacterized protein (369 aa).

A compositionally biased stretch (low complexity) spans Ala-110–Ala-121. Residues Ala-110–Ala-172 are disordered. Over residues Pro-122–Ala-136 the composition is skewed to pro residues.

This is an uncharacterized protein from Lymantria dispar multicapsid nuclear polyhedrosis virus (LdMNPV).